A 37-amino-acid chain; its full sequence is Large ribosomal subunit protein bL36 (37 aa).

Belongs to the bacterial ribosomal protein bL36 family.

The chain is Large ribosomal subunit protein bL36 from Beutenbergia cavernae (strain ATCC BAA-8 / DSM 12333 / CCUG 43141 / JCM 11478 / NBRC 16432 / NCIMB 13614 / HKI 0122).